Consider the following 85-residue polypeptide: Small ribosomal subunit protein uS17 (85 aa).

It belongs to the universal ribosomal protein uS17 family. In terms of assembly, part of the 30S ribosomal subunit.

Functionally, one of the primary rRNA binding proteins, it binds specifically to the 5'-end of 16S ribosomal RNA. This is Small ribosomal subunit protein uS17 from Pseudoalteromonas translucida (strain TAC 125).